The following is a 373-amino-acid chain: ATP phosphoribosyltransferase regulatory subunit (373 aa).

Belongs to the class-II aminoacyl-tRNA synthetase family. HisZ subfamily. As to quaternary structure, heteromultimer composed of HisG and HisZ subunits.

Its subcellular location is the cytoplasm. It functions in the pathway amino-acid biosynthesis; L-histidine biosynthesis; L-histidine from 5-phospho-alpha-D-ribose 1-diphosphate: step 1/9. In terms of biological role, required for the first step of histidine biosynthesis. May allow the feedback regulation of ATP phosphoribosyltransferase activity by histidine. In Chelativorans sp. (strain BNC1), this protein is ATP phosphoribosyltransferase regulatory subunit.